Consider the following 484-residue polypeptide: Bifunctional protein GlmU (484 aa).

Residues 1–240 form a pyrophosphorylase region; it reads MSASRPAAVM…RTEVEGVNDR (240 aa). UDP-N-acetyl-alpha-D-glucosamine is bound by residues 12–15, lysine 26, glutamine 79, and 84–85; these read LAAG and GT. Residue aspartate 113 coordinates Mg(2+). Glycine 150, glutamate 165, asparagine 180, and asparagine 238 together coordinate UDP-N-acetyl-alpha-D-glucosamine. Residue asparagine 238 coordinates Mg(2+). A linker region spans residues 241-261; sequence VQLAEARRLLNARLLEQLMRD. The tract at residues 262–484 is N-acetyltransferase; that stretch reads GVTVVDPAST…RARARSEEDR (223 aa). UDP-N-acetyl-alpha-D-glucosamine is bound by residues arginine 343 and lysine 361. Catalysis depends on histidine 373, which acts as the Proton acceptor. 2 residues coordinate UDP-N-acetyl-alpha-D-glucosamine: tyrosine 376 and asparagine 387. Residues alanine 390, 396-397, serine 415, and alanine 433 each bind acetyl-CoA; that span reads NY. A disordered region spans residues 457–484; it reads EGWVERKRPGTPAAQAAERARARSEEDR. The span at 474-484 shows a compositional bias: basic and acidic residues; that stretch reads ERARARSEEDR.

It in the N-terminal section; belongs to the N-acetylglucosamine-1-phosphate uridyltransferase family. The protein in the C-terminal section; belongs to the transferase hexapeptide repeat family. In terms of assembly, homotrimer. It depends on Mg(2+) as a cofactor.

It localises to the cytoplasm. It catalyses the reaction alpha-D-glucosamine 1-phosphate + acetyl-CoA = N-acetyl-alpha-D-glucosamine 1-phosphate + CoA + H(+). The catalysed reaction is N-acetyl-alpha-D-glucosamine 1-phosphate + UTP + H(+) = UDP-N-acetyl-alpha-D-glucosamine + diphosphate. The protein operates within nucleotide-sugar biosynthesis; UDP-N-acetyl-alpha-D-glucosamine biosynthesis; N-acetyl-alpha-D-glucosamine 1-phosphate from alpha-D-glucosamine 6-phosphate (route II): step 2/2. Its pathway is nucleotide-sugar biosynthesis; UDP-N-acetyl-alpha-D-glucosamine biosynthesis; UDP-N-acetyl-alpha-D-glucosamine from N-acetyl-alpha-D-glucosamine 1-phosphate: step 1/1. It functions in the pathway bacterial outer membrane biogenesis; LPS lipid A biosynthesis. Functionally, catalyzes the last two sequential reactions in the de novo biosynthetic pathway for UDP-N-acetylglucosamine (UDP-GlcNAc). The C-terminal domain catalyzes the transfer of acetyl group from acetyl coenzyme A to glucosamine-1-phosphate (GlcN-1-P) to produce N-acetylglucosamine-1-phosphate (GlcNAc-1-P), which is converted into UDP-GlcNAc by the transfer of uridine 5-monophosphate (from uridine 5-triphosphate), a reaction catalyzed by the N-terminal domain. This Thermobifida fusca (strain YX) protein is Bifunctional protein GlmU.